A 272-amino-acid polypeptide reads, in one-letter code: Low-density lipoprotein receptor class A domain-containing protein 2 (272 aa).

An N-terminal signal peptide occupies residues Met1–Ala25. Residues Leu26 to Ser233 are Extracellular-facing. Residue Asn97 is glycosylated (N-linked (GlcNAc...) asparagine). The region spanning Pro172–Arg214 is the LDL-receptor class A domain. 3 cysteine pairs are disulfide-bonded: Cys173–Cys184, Cys179–Cys199, and Cys191–Cys213. Residues Gly202 to Glu272 are disordered. Polar residues predominate over residues Pro220–Pro236. Residues Leu234 to Ala250 traverse the membrane as a helical segment. Topologically, residues Glu251–Glu272 are cytoplasmic.

This sequence belongs to the LDLR family.

It is found in the membrane. The protein is Low-density lipoprotein receptor class A domain-containing protein 2 (LDLRAD2) of Homo sapiens (Human).